Reading from the N-terminus, the 430-residue chain is Sphingosine-1-phosphate phosphatase 1 (430 aa).

The interval 34-103 (SSPAADEDAE…AGSQRRNSLT (70 aa)) is disordered. Ser-101 carries the phosphoserine modification. Phosphothreonine is present on Thr-103. 4 consecutive transmembrane segments (helical) span residues 121 to 141 (FCLG…PFWI), 152 to 172 (LVII…IIRW), 193 to 213 (MPST…LLTY), and 216 to 236 (WQYP…LVCL). A phosphatase sequence motif I region spans residues 167-175 (KDIIRWPRP). Residues 194 to 197 (PSTH) are phosphatase sequence motif II. His-197 (proton donor) is an active-site residue. The phosphatase sequence motif III stretch occupies residues 237–248 (SRIYMGMHSILD). His-244 serves as the catalytic Nucleophile. 5 helical membrane-spanning segments follow: residues 246–266 (ILDV…FYPL), 279–299 (YAPL…FTLD), 311–331 (ILGS…LGLS), 348–368 (VTLF…VLFV), and 409–429 (YGMV…FIGI).

The protein belongs to the type 2 lipid phosphate phosphatase family. In terms of tissue distribution, highly expressed in liver and kidney. Expressed in epidermis, in the stratum granulosum and the stratum spinosum.

It is found in the endoplasmic reticulum membrane. It localises to the cell membrane. It carries out the reaction sphinganine 1-phosphate + H2O = sphinganine + phosphate. The enzyme catalyses sphing-4-enine 1-phosphate + H2O = sphing-4-enine + phosphate. Its activity is regulated as follows. Inhibited by NaF, sodium orthovanadate, propanolol, and N-ethylmaleimide. Specifically dephosphorylates sphingosine 1-phosphate (S1P), dihydro-S1P, and phyto-S1P. Does not act on ceramide 1-phosphate, lysophosphatidic acid or phosphatidic acid. Sphingosine-1-phosphate phosphatase activity is needed for efficient recycling of sphingosine into the sphingolipid synthesis pathway. Regulates the intracellular levels of the bioactive sphingolipid metabolite S1P that regulates diverse biological processes acting both as an extracellular receptor ligand or as an intracellular second messenger. Involved in efficient ceramide synthesis from exogenous sphingoid bases. Converts S1P to sphingosine, which is readily metabolized to ceramide via ceramide synthase. In concert with sphingosine kinase 2 (SphK2), recycles sphingosine into ceramide through a phosphorylation/dephosphorylation cycle. Regulates endoplasmic-to-Golgi trafficking of ceramides, resulting in the regulation of ceramide levels in the endoplasmic reticulum, preferentially long-chain ceramide species, and influences the anterograde membrane transport of both ceramide and proteins from the endoplasmic reticulum to the Golgi apparatus. The modulation of intracellular ceramide levels in turn regulates apoptosis. Via S1P levels, modulates resting tone, intracellular Ca(2+) and myogenic vasoconstriction in resistance arteries. Also involved in unfolded protein response (UPR) and ER stress-induced autophagy via regulation of intracellular S1P levels. Involved in the regulation of epidermal homeostasis and keratinocyte differentiation. This Mus musculus (Mouse) protein is Sphingosine-1-phosphate phosphatase 1.